The following is an 812-amino-acid chain: Plasminogen (812 aa).

The N-terminal stretch at 1 to 19 (MDHKEIILLFLLFLKPGQG) is a signal peptide. Positions 20–98 (DSLDGYVSTQ…RDVILFEKRV (79 aa)) constitute a PAN domain. 21 disulfide bridges follow: Cys-49–Cys-73, Cys-53–Cys-61, Cys-103–Cys-181, Cys-124–Cys-164, Cys-152–Cys-176, Cys-185–Cys-262, Cys-188–Cys-316, Cys-206–Cys-245, Cys-234–Cys-257, Cys-275–Cys-352, Cys-296–Cys-335, Cys-324–Cys-347, Cys-376–Cys-454, Cys-397–Cys-437, Cys-425–Cys-449, Cys-481–Cys-560, Cys-502–Cys-543, Cys-531–Cys-555, Cys-568–Cys-687, Cys-578–Cys-586, and Cys-609–Cys-625. 5 Kringle domains span residues 102–181 (ECKT…IPEC), 184–262 (ECMY…IPRC), 274–352 (QCLK…IPSC), 375–454 (ECYQ…LKRC), and 480–560 (DCMY…IPLC). Residues 582 to 810 (VVGGCVANPH…YVNWIEREMR (229 aa)) form the Peptidase S1 domain. Ser-598 is modified (phosphoserine). Catalysis depends on charge relay system residues His-624 and Asp-667. At Ser-690 the chain carries Phosphoserine. 3 disulfides stabilise this stretch: Cys-701-Cys-768, Cys-731-Cys-747, and Cys-758-Cys-786. Ser-762 (charge relay system) is an active-site residue.

Belongs to the peptidase S1 family. Plasminogen subfamily. As to quaternary structure, interacts (both mature PLG and the angiostatin peptide) with AMOT and CSPG4. Interacts (via the Kringle domains) with HRG; the interaction tethers PLG to the cell surface and enhances its activation. Interacts (via Kringle 4 domain) with ADA; the interaction stimulates PLG activation when in complex with DPP4. Angiostatin: Interacts with ATP5F1A; the interaction inhibits most of the angiogenic effects of angiostatin. In the presence of the inhibitor, the activation involves only cleavage after Arg-581, yielding two chains held together by two disulfide bonds. In the absence of the inhibitor, the activation involves additionally the removal of the activation peptide.

The protein resides in the secreted. The enzyme catalyses Preferential cleavage: Lys-|-Xaa &gt; Arg-|-Xaa, higher selectivity than trypsin. Converts fibrin into soluble products.. With respect to regulation, converted into plasmin by plasminogen activators, both plasminogen and its activator being bound to fibrin. Cannot be activated with streptokinase. Plasmin dissolves the fibrin of blood clots and acts as a proteolytic factor in a variety of other processes including embryonic development, tissue remodeling, tumor invasion, and inflammation. In ovulation, weakens the walls of the Graafian follicle. It activates the urokinase-type plasminogen activator, collagenases and several complement zymogens, such as C1, C4 and C5. Cleavage of fibronectin and laminin leads to cell detachment and apoptosis. Also cleaves fibrin, thrombospondin and von Willebrand factor. Its role in tissue remodeling and tumor invasion may be modulated by CSPG4. Binds to cells. Functionally, angiostatin is an angiogenesis inhibitor that blocks neovascularization and growth of experimental primary and metastatic tumors in vivo. The sequence is that of Plasminogen (Plg) from Rattus norvegicus (Rat).